The following is a 438-amino-acid chain: Aspartate--tRNA(Asp/Asn) ligase (438 aa).

E176 is a binding site for L-aspartate. An aspartate region spans residues Q198–K201. Residue R220 coordinates L-aspartate. Residues R220 to E222, R228 to L230, and E361 each bind ATP. Positions 361 and 364 each coordinate Mg(2+). Positions 364 and 368 each coordinate L-aspartate. Position 409-412 (G409–R412) interacts with ATP.

The protein belongs to the class-II aminoacyl-tRNA synthetase family. Type 2 subfamily. As to quaternary structure, homodimer. It depends on Mg(2+) as a cofactor.

It is found in the cytoplasm. It catalyses the reaction tRNA(Asx) + L-aspartate + ATP = L-aspartyl-tRNA(Asx) + AMP + diphosphate. Functionally, aspartyl-tRNA synthetase with relaxed tRNA specificity since it is able to aspartylate not only its cognate tRNA(Asp) but also tRNA(Asn). Reaction proceeds in two steps: L-aspartate is first activated by ATP to form Asp-AMP and then transferred to the acceptor end of tRNA(Asp/Asn). The sequence is that of Aspartate--tRNA(Asp/Asn) ligase from Methanococcus vannielii (strain ATCC 35089 / DSM 1224 / JCM 13029 / OCM 148 / SB).